We begin with the raw amino-acid sequence, 101 residues long: Small ribosomal subunit protein uS17 (101 aa).

This sequence belongs to the universal ribosomal protein uS17 family. Part of the 30S ribosomal subunit.

One of the primary rRNA binding proteins, it binds specifically to the 5'-end of 16S ribosomal RNA. In Kosmotoga olearia (strain ATCC BAA-1733 / DSM 21960 / TBF 19.5.1), this protein is Small ribosomal subunit protein uS17.